Here is a 337-residue protein sequence, read N- to C-terminus: Cytoskeleton protein RodZ (337 aa).

At 1–111 the chain is on the cytoplasmic side; the sequence is MNTEATHDQN…LGKRRKKRDG (111 aa). An HTH cro/C1-type domain is found at 19–71; the sequence is LRNAREQLGLSQQAVAERLCLKVSTVRDIEEDKAPADLASTFLRGYIRSYARL. A DNA-binding region (H-T-H motif) is located at residues 30-49; that stretch reads QQAVAERLCLKVSTVRDIEE. Residues 112 to 132 traverse the membrane as a helical; Signal-anchor for type II membrane protein segment; it reads WLMTFTWLVLFVVIGLSGAWW. Over 133–337 the chain is Periplasmic; that stretch reads WQDHKAQQEE…TLNAEQSPAQ (205 aa). Positions 145 to 167 are enriched in polar residues; sequence TMADQSSAELSSNSEQGQSVPLN. Positions 145-236 are disordered; sequence TMADQSSAEL…TAATTPDGAA (92 aa). The span at 168–207 shows a compositional bias: low complexity; the sequence is TSTTTDPATTSTPPASVDTTATNTQTPAVTAPAPAVDPQQ. A compositionally biased stretch (polar residues) spans 208–218; it reads NAVVSPSQANV. The span at 219-236 shows a compositional bias: low complexity; it reads DTAATPAPTAATTPDGAA.

It belongs to the RodZ family.

The protein resides in the cell inner membrane. Cytoskeletal protein that is involved in cell-shape control through regulation of the length of the long axis. This is Cytoskeleton protein RodZ from Escherichia coli O139:H28 (strain E24377A / ETEC).